A 734-amino-acid polypeptide reads, in one-letter code: Fc receptor-like protein 3 (734 aa).

A signal peptide spans 1–17; sequence MLLWLLLLILTPGREQS. At 18 to 573 the chain is on the extracellular side; sequence GVAPKAVLLL…GTSRNRTGLT (556 aa). 6 Ig-like C2-type domains span residues 21 to 98, 99 to 182, 192 to 270, 284 to 369, 383 to 470, and 476 to 563; these read PKAV…VEFS, PDWL…KPLN, PVLR…HSIK, PVSN…PILS, PVLT…LRVT, and PVLT…LNVT. Intrachain disulfides connect cysteine 44/cysteine 82, cysteine 120/cysteine 163, cysteine 211/cysteine 260, cysteine 309/cysteine 358, cysteine 404/cysteine 451, and cysteine 497/cysteine 544. Asparagine 561 is a glycosylation site (N-linked (GlcNAc...) asparagine). A helical membrane pass occupies residues 574 to 594; that stretch reads AAGITGLVLSILVLAAAAALL. The Cytoplasmic segment spans residues 595-734; sequence HYARARRKPG…VPRVLLASDH (140 aa). Positions 603 to 655 are disordered; that stretch reads PGGLSATGTSSHSPSECQEPSSSRPSRIDPQEPTHSKPLAPMELEPMYSNVNP. The segment covering 608–627 has biased composition (polar residues); sequence ATGTSSHSPSECQEPSSSRP. Positions 628 to 637 are enriched in basic and acidic residues; the sequence is SRIDPQEPTH. 4 short sequence motifs (ITIM motif) span residues 648–653, 660–665, 690–695, and 720–725; these read PMYSNV, PIYSQI, VLYSEL, and ENYENV. A phosphotyrosine mark is found at tyrosine 650, tyrosine 662, tyrosine 692, and tyrosine 722. Residues 695–734 are disordered; it reads LKKTHPDDSAGEASSRGRAHEEDDEENYENVPRVLLASDH.

Interacts (via phosphorylated ITIM motifs) with phosphatases INPP5D, PTPN6 and PTPN11. Interacts (via ITIM motifs) SYK and ZAP70. Interacts with IZUMO1R/JUNO. Interacts (via extracellular domain) with IZUMO1; the interaction replaces IZUMO1R/JUNO as IZUMO1 receptor after adhesion between sperm and egg. Post-translationally, phosphorylated on cytoplasmic tyrosines; required for interaction with protein tyrosine phosphatases and protein tyrosine kinases. As to expression, primarily expressed in secondary lymphoid tissues by mature subsets of B-cells. Low expression on transitional B cells which increases to higher surface expression on mature and memory B-cells with innate-like features (at protein level). Expressed a low levels in naive and germinal center B-cells but also expressed in NK cells (at protein level). Expressed in unfertilized oocytes (at protein level). Expressed in a population of thymically derived naturally occurring regulatory T-cells that exhibits a memory phenotype, specialized in suppressing immune response to self-antigens. Detected in spleen, lymph node, peripheral blood lymphocytes, thymus, bone marrow, kidney, salivary gland, adrenal gland and uterus.

It is found in the cell membrane. The protein localises to the cell projection. The protein resides in the microvillus membrane. In terms of biological role, promotes TLR9-induced B-cell proliferation, activation and survival but inhibits antibody production and suppresses plasma cell differentiation. Enhances activation of NF-kappa-B and MAPK signaling pathways in TLR9 stimulated B-cells. Has inhibitory potentional on B-cell receptor (BCR)-mediated signaling, possibly through association with SH2 domain-containing phosphatases. Inhibits cell tyrosine phosphorylation, calcium mobilization and activation-induced cell death induced through BCR signaling. Regulatory T-cells expressing FCRL3 exhibit a memory phenotype, are relatively nonresponsive to antigenic stimulation in presence of IL2 and have reduced capacity to suppress the proliferation of effector T-cells. Acts as a human-specific epitope on the cell surface of oocytes (oolemma) and plays a role during sperm-egg adhesion and fusion. Interacts with the IZUMO1-IZUMO1R/JUNO sperm-egg complex and replaces IZUMO1R/JUNO as IZUMO1 receptor during fertilization, thereby permitting species-specific gamete fusion. In Homo sapiens (Human), this protein is Fc receptor-like protein 3.